Reading from the N-terminus, the 332-residue chain is Biotin synthase (332 aa).

Residues 51-279 enclose the Radical SAM core domain; it reads YKVQLASLLS…RSRVRLSAGR (229 aa). [4Fe-4S] cluster is bound by residues cysteine 66, cysteine 70, and cysteine 73. [2Fe-2S] cluster-binding residues include cysteine 110, cysteine 142, cysteine 202, and arginine 274.

Belongs to the radical SAM superfamily. Biotin synthase family. Homodimer. [4Fe-4S] cluster is required as a cofactor. It depends on [2Fe-2S] cluster as a cofactor.

The enzyme catalyses (4R,5S)-dethiobiotin + (sulfur carrier)-SH + 2 reduced [2Fe-2S]-[ferredoxin] + 2 S-adenosyl-L-methionine = (sulfur carrier)-H + biotin + 2 5'-deoxyadenosine + 2 L-methionine + 2 oxidized [2Fe-2S]-[ferredoxin]. It functions in the pathway cofactor biosynthesis; biotin biosynthesis; biotin from 7,8-diaminononanoate: step 2/2. Catalyzes the conversion of dethiobiotin (DTB) to biotin by the insertion of a sulfur atom into dethiobiotin via a radical-based mechanism. This Prochlorococcus marinus (strain SARG / CCMP1375 / SS120) protein is Biotin synthase.